Here is a 565-residue protein sequence, read N- to C-terminus: Transmembrane 7 superfamily member 3 (565 aa).

The first 21 residues, 1-21 (MWRLRLLVLAVLAAGSAEAQA), serve as a signal peptide directing secretion. N-linked (GlcNAc...) asparagine glycans are attached at residues N22, N56, N70, and N259. The next 7 membrane-spanning stretches (helical) occupy residues 287-307 (VSTK…CFFG), 311-331 (WKTE…YILI), 341-361 (VRLV…VASW), 364-384 (FGIL…LVSS), 402-422 (VFWV…LGCL), 427-447 (ILAC…SYMF), and 478-498 (NDYI…TLQI).

The protein resides in the cell membrane. Involved in the inhibition of cytokine-induced death of pancreatic beta cells. Involved in the promotion of insulin secretion from pancreatic beta cells. Is a downstream transcriptional target of p53/TP53, and acts as a pro-survival homeostatic factor that attenuates the development of cellular stress. Maintains protein homeostasis and promotes cell survival through attenuation of endoplasmic reticulum (ER) stress and the subsequent induction of unfolded protein response (UPR). The chain is Transmembrane 7 superfamily member 3 (Tm7sf3) from Rattus norvegicus (Rat).